The chain runs to 156 residues: MKLNDLRDKPGSVKARKRVGRGIGSGTGKTGGRGVKGQKSRSGVAINGFEGGQMPIYRRLPKRGFTNIFAKSFNVVSLGRVQAAIDAGKLDAKAVVNLDSLKAAGVIRRAKDGVRILSDGELKAKVAFEVAGASKAAVEKIEKAGGSIKLPEAAAE.

Basic and acidic residues predominate over residues 1–11 (MKLNDLRDKPG). Positions 1–40 (MKLNDLRDKPGSVKARKRVGRGIGSGTGKTGGRGVKGQKS) are disordered. The span at 21–35 (RGIGSGTGKTGGRGV) shows a compositional bias: gly residues.

The protein belongs to the universal ribosomal protein uL15 family. As to quaternary structure, part of the 50S ribosomal subunit.

In terms of biological role, binds to the 23S rRNA. The sequence is that of Large ribosomal subunit protein uL15 from Brucella anthropi (strain ATCC 49188 / DSM 6882 / CCUG 24695 / JCM 21032 / LMG 3331 / NBRC 15819 / NCTC 12168 / Alc 37) (Ochrobactrum anthropi).